The sequence spans 144 residues: Large ribosomal subunit protein uL15 (144 aa).

Positions 1–52 (MIKLESLQDPSPRKRRKKLLGRGPGSGHGKTSGRGHKGDGSRSGYKRRFGYE) are disordered. Positions 22–32 (RGPGSGHGKTS) are enriched in gly residues.

It belongs to the universal ribosomal protein uL15 family. As to quaternary structure, part of the 50S ribosomal subunit.

Functionally, binds to the 23S rRNA. This is Large ribosomal subunit protein uL15 from Chlamydia felis (strain Fe/C-56) (Chlamydophila felis).